We begin with the raw amino-acid sequence, 273 residues long: MSNRTVFFISDGTGITAETFGNAILAQFEISPRHVRLPFIDTVDKAHQAIRHINHTGELEGKRPIVFTTLVNMDILAVLKAQCNGMLLDMFGIFVAPLESELGIKSNHRVGRFSDASKSKAYDERIEAINFSLAHDDGQSHRDLAGSDVILVGVSRSGKTPTTLYLAMQYGLKASNYPLIPEDFERRQLPPALVPHRKKIFGLTIAPERLSQIRNERRPNSTYSSLANCRNEIHEAEAMMRREGIRWLSTTTKSIEEIATTILQEIRPERLEY.

Position 153–160 (153–160) interacts with ADP; sequence GVSRSGKT.

It belongs to the pyruvate, phosphate/water dikinase regulatory protein family. PSRP subfamily.

The enzyme catalyses [pyruvate, water dikinase] + ADP = [pyruvate, water dikinase]-phosphate + AMP + H(+). The catalysed reaction is [pyruvate, water dikinase]-phosphate + phosphate + H(+) = [pyruvate, water dikinase] + diphosphate. Its function is as follows. Bifunctional serine/threonine kinase and phosphorylase involved in the regulation of the phosphoenolpyruvate synthase (PEPS) by catalyzing its phosphorylation/dephosphorylation. The sequence is that of Putative phosphoenolpyruvate synthase regulatory protein from Polaromonas naphthalenivorans (strain CJ2).